The chain runs to 338 residues: Anthranilate phosphoribosyltransferase (338 aa).

Residues Gly-82, 85–86 (GD), Thr-90, 92–95 (NIST), 110–118 (KHGNRAASS), and Ser-122 contribute to the 5-phospho-alpha-D-ribose 1-diphosphate site. Residue Gly-82 participates in anthranilate binding. Ser-94 lines the Mg(2+) pocket. Asn-113 is a binding site for anthranilate. Anthranilate is bound at residue Arg-168. The Mg(2+) site is built by Asp-226 and Glu-227.

Belongs to the anthranilate phosphoribosyltransferase family. Homodimer. It depends on Mg(2+) as a cofactor.

It catalyses the reaction N-(5-phospho-beta-D-ribosyl)anthranilate + diphosphate = 5-phospho-alpha-D-ribose 1-diphosphate + anthranilate. Its pathway is amino-acid biosynthesis; L-tryptophan biosynthesis; L-tryptophan from chorismate: step 2/5. Catalyzes the transfer of the phosphoribosyl group of 5-phosphorylribose-1-pyrophosphate (PRPP) to anthranilate to yield N-(5'-phosphoribosyl)-anthranilate (PRA). In Deinococcus radiodurans (strain ATCC 13939 / DSM 20539 / JCM 16871 / CCUG 27074 / LMG 4051 / NBRC 15346 / NCIMB 9279 / VKM B-1422 / R1), this protein is Anthranilate phosphoribosyltransferase.